The chain runs to 568 residues: Transport inhibitor response 1-like protein Os11g0515500 (568 aa).

Residues 1-45 (MVFFPEEVVEHILGFLASHRDRNAVSLVCREWYRVERLSRRSVLV) form the F-box domain. Residues lysine 69, 103 to 104 (KR), and arginine 335 each bind 1D-myo-inositol hexakisphosphate. Residues 338–343 (PANANA) are interaction with auxin-responsive proteins. 390–392 (SFR) provides a ligand contact to 1D-myo-inositol hexakisphosphate. Residues 394–398 (CVLDP) form an interaction with auxin-responsive proteins region. Residue arginine 425 coordinates 1D-myo-inositol hexakisphosphate. Positions 453 to 454 (AF) are interaction with auxin-responsive proteins. 1D-myo-inositol hexakisphosphate is bound by residues 473–474 (KK) and arginine 498.

As to quaternary structure, part of a SCF (SKP1-cullin-F-box) protein ligase complex. May interact with auxin and auxin-responsive proteins.

Its subcellular location is the nucleus. It participates in protein modification; protein ubiquitination. The chain is Transport inhibitor response 1-like protein Os11g0515500 from Oryza sativa subsp. japonica (Rice).